The following is a 207-amino-acid chain: 3-isopropylmalate dehydratase small subunit (207 aa).

This sequence belongs to the LeuD family. LeuD type 1 subfamily. In terms of assembly, heterodimer of LeuC and LeuD.

The catalysed reaction is (2R,3S)-3-isopropylmalate = (2S)-2-isopropylmalate. It participates in amino-acid biosynthesis; L-leucine biosynthesis; L-leucine from 3-methyl-2-oxobutanoate: step 2/4. In terms of biological role, catalyzes the isomerization between 2-isopropylmalate and 3-isopropylmalate, via the formation of 2-isopropylmaleate. The polypeptide is 3-isopropylmalate dehydratase small subunit (Gluconacetobacter diazotrophicus (strain ATCC 49037 / DSM 5601 / CCUG 37298 / CIP 103539 / LMG 7603 / PAl5)).